Reading from the N-terminus, the 263-residue chain is Type II restriction enzyme TaqI (263 aa).

Only 15% of purified enzyme (upon expression in E.coli) can be sequenced, suggesting the remainder has a blocked N-terminus.

The catalysed reaction is Endonucleolytic cleavage of DNA to give specific double-stranded fragments with terminal 5'-phosphates.. In terms of biological role, a P subtype restriction enzyme that recognizes the double-stranded sequence 5'-TCGA-3' and cleaves after T-1. In Thermus aquaticus, this protein is Type II restriction enzyme TaqI (taqIR).